The sequence spans 296 residues: Farnesyl diphosphate synthase (296 aa).

Isopentenyl diphosphate is bound by residues Lys-46, Arg-49, and His-78. The Mg(2+) site is built by Asp-85 and Asp-91. Arg-96 provides a ligand contact to (2E)-geranyl diphosphate. Arg-97 lines the isopentenyl diphosphate pocket. The (2E)-geranyl diphosphate site is built by Lys-182, Thr-183, Gln-220, and Lys-237.

This sequence belongs to the FPP/GGPP synthase family. The cofactor is Mg(2+).

The protein resides in the cytoplasm. The enzyme catalyses isopentenyl diphosphate + (2E)-geranyl diphosphate = (2E,6E)-farnesyl diphosphate + diphosphate. The chain is Farnesyl diphosphate synthase (ispA) from Bacillus subtilis (strain 168).